Here is a 103-residue protein sequence, read N- to C-terminus: MYALIEYKGKQYKAEKGAKLVVDKLSAESGSKIDIDTVLLISDGDKVTVGTPYVSGAKVSATVGDSFRERKIIVYKHKAKKNYHRTQGHRQAHTCITVDNIVG.

The protein belongs to the bacterial ribosomal protein bL21 family. Part of the 50S ribosomal subunit. Contacts protein L20.

This protein binds to 23S rRNA in the presence of protein L20. This is Large ribosomal subunit protein bL21 from Treponema denticola (strain ATCC 35405 / DSM 14222 / CIP 103919 / JCM 8153 / KCTC 15104).